The sequence spans 303 residues: Maltose/maltodextrin transport system permease protein MalG (303 aa).

The Cytoplasmic segment spans residues 1 to 19; the sequence is MTKEEMQMAMVQPKSQRLR. A helical membrane pass occupies residues 20–42; the sequence is LLGTHFLMLCFIALIMFPLLMVI. Residues 43-95 lie on the Periplasmic side of the membrane; the sequence is AISLRPGNFATGSLIPDQISWEHWKLALGMSVTHADGSVTPPPFPVMLWLWNS. The region spanning 92–288 is the ABC transmembrane type-1 domain; the sequence is LWNSIKIALI…IPITTVFLLA (197 aa). A helical membrane pass occupies residues 96–118; the sequence is IKIALITAMGIVALSTTCAYAFA. Residues 119–130 lie on the Cytoplasmic side of the membrane; that stretch reads RMRFRGKSALLK. A helical transmembrane segment spans residues 131–150; that stretch reads GMLIFQMFPAVLSLVALYAL. Over 151–159 the chain is Periplasmic; it reads FDRIGQYMP. The helical transmembrane segment at 160 to 182 threads the bilayer; that stretch reads FIGLNTHGGVIFAYMGGIALHVW. Residues 183–211 are Cytoplasmic-facing; the sequence is TIKGYFETIDNSLEEAAALDGATPWQAFR. A helical transmembrane segment spans residues 212 to 234; it reads LVLLPLSVPILAVVFILSFIAAI. Residues 235–265 lie on the Periplasmic side of the membrane; it reads TEVPVASLLLRDVNSYTLAVGMQQYLNPQNY. The helical transmembrane segment at 266 to 288 threads the bilayer; that stretch reads LWGDFAAAAVLSAIPITTVFLLA. Over 289-303 the chain is Cytoplasmic; it reads QRWLVGGLTAGGVKG.

The protein belongs to the binding-protein-dependent transport system permease family. MalFG subfamily. In terms of assembly, the complex is composed of two ATP-binding proteins (MalK), two transmembrane proteins (MalG and MalF) and a solute-binding protein (MalE).

It localises to the cell inner membrane. Its function is as follows. Part of the ABC transporter complex MalEFGK involved in maltose/maltodextrin import. Probably responsible for the translocation of the substrate across the membrane. This Yersinia pestis protein is Maltose/maltodextrin transport system permease protein MalG (malG).